The sequence spans 367 residues: Phosphoribosylaminoimidazole-succinocarboxamide synthase (367 aa).

This sequence belongs to the SAICAR synthetase family.

The catalysed reaction is 5-amino-1-(5-phospho-D-ribosyl)imidazole-4-carboxylate + L-aspartate + ATP = (2S)-2-[5-amino-1-(5-phospho-beta-D-ribosyl)imidazole-4-carboxamido]succinate + ADP + phosphate + 2 H(+). It participates in purine metabolism; IMP biosynthesis via de novo pathway; 5-amino-1-(5-phospho-D-ribosyl)imidazole-4-carboxamide from 5-amino-1-(5-phospho-D-ribosyl)imidazole-4-carboxylate: step 1/2. The chain is Phosphoribosylaminoimidazole-succinocarboxamide synthase from Aliivibrio fischeri (strain MJ11) (Vibrio fischeri).